Consider the following 120-residue polypeptide: Large ribosomal subunit protein bL12 (120 aa).

It belongs to the bacterial ribosomal protein bL12 family. Homodimer. Part of the ribosomal stalk of the 50S ribosomal subunit. Forms a multimeric L10(L12)X complex, where L10 forms an elongated spine to which 2 to 4 L12 dimers bind in a sequential fashion. Binds GTP-bound translation factors.

Functionally, forms part of the ribosomal stalk which helps the ribosome interact with GTP-bound translation factors. Is thus essential for accurate translation. The sequence is that of Large ribosomal subunit protein bL12 from Haemophilus ducreyi (strain 35000HP / ATCC 700724).